We begin with the raw amino-acid sequence, 311 residues long: Aspartate carbamoyltransferase catalytic subunit (311 aa).

Positions 59 and 60 each coordinate carbamoyl phosphate. Residue lysine 87 participates in L-aspartate binding. Residues arginine 109, histidine 139, and glutamine 142 each coordinate carbamoyl phosphate. L-aspartate contacts are provided by arginine 172 and arginine 224. Carbamoyl phosphate-binding residues include alanine 265 and proline 266.

The protein belongs to the aspartate/ornithine carbamoyltransferase superfamily. ATCase family. Heterododecamer (2C3:3R2) of six catalytic PyrB chains organized as two trimers (C3), and six regulatory PyrI chains organized as three dimers (R2).

The enzyme catalyses carbamoyl phosphate + L-aspartate = N-carbamoyl-L-aspartate + phosphate + H(+). Its pathway is pyrimidine metabolism; UMP biosynthesis via de novo pathway; (S)-dihydroorotate from bicarbonate: step 2/3. Functionally, catalyzes the condensation of carbamoyl phosphate and aspartate to form carbamoyl aspartate and inorganic phosphate, the committed step in the de novo pyrimidine nucleotide biosynthesis pathway. This is Aspartate carbamoyltransferase catalytic subunit from Streptococcus equi subsp. equi (strain 4047).